Here is a 412-residue protein sequence, read N- to C-terminus: Major facilitator superfamily domain-containing protein 3 (412 aa).

12 helical membrane-spanning segments follow: residues 10–30 (GLYL…PILL), 40–60 (VGLT…APLV), 68–88 (VWLT…AVLP), 99–119 (TTVM…DVAL), 152–172 (GGLL…LLAA), 173–193 (TYWL…LPWP), 204–224 (YLLQ…FVLT), 252–272 (LWSG…GGAL), 291–311 (LGSL…GASV), 320–340 (AVLL…TATF), 361–381 (FLAT…GVLA), and 384–404 (LGPH…VLDL).

It belongs to the major facilitator superfamily. As to expression, in brain, expressed in the cortex, striatum, hippocampus, hypothalamus, thalamus and cerebellum (at protein level). Widely expressed with highest levels in kidney and liver.

It is found in the membrane. This chain is Major facilitator superfamily domain-containing protein 3 (Mfsd3), found in Mus musculus (Mouse).